A 514-amino-acid chain; its full sequence is Deoxynucleoside triphosphate triphosphohydrolase SAMHD1 homolog (514 aa).

The disordered stretch occupies residues 1 to 24 (MNNTFKYVNEDVSGTEGEESDYDP). Lysine 80 is a binding site for GTP. Asparagine 83 contacts a 2'-deoxyribonucleoside 5'-triphosphate. Position 101-109 (101-109 (DTEQFQRLR)) interacts with GTP. Residues glutamine 113 and arginine 128 each coordinate substrate. The HD domain occupies 128 to 259 (RFEHSIGVSH…SVDVDKFDYL (132 aa)). Positions 131, 170, and 171 each coordinate Zn(2+). A substrate-binding site is contributed by histidine 174. Residue histidine 196 is part of the active site. Substrate-binding positions include 252–258 (DVDKFDY), tyrosine 258, and aspartate 262. Aspartate 254 is a Zn(2+) binding site. A 2'-deoxyribonucleoside 5'-triphosphate contacts are provided by residues arginine 276, 291–293 (LSK), and asparagine 297. Substrate-binding positions include arginine 305 and 309-314 (HKLVYT). Residues histidine 315 and lysine 316 each contribute to the a 2'-deoxyribonucleoside 5'-triphosphate site. The GTP site is built by arginine 380 and lysine 384.

This sequence belongs to the SAMHD1 family. In terms of assembly, homodimer; in absence of GTP and dNTP. Homotetramer; in GTP- and dNTP-bound form. The cofactor is Zn(2+).

The enzyme catalyses a 2'-deoxyribonucleoside 5'-triphosphate + H2O = a 2'-deoxyribonucleoside + triphosphate + H(+). Allosterically activated and regulated via the combined actions of GTP and dNTPs (dATP, dGTP, dTTP and dCTP): Allosteric site 1 binds GTP, while allosteric site 2 binds dNTP. Allosteric activation promotes the formation of highly active homotetramers. Functionally, has deoxynucleoside triphosphate (dNTPase) activity. The sequence is that of Deoxynucleoside triphosphate triphosphohydrolase SAMHD1 homolog from Dictyostelium discoideum (Social amoeba).